The chain runs to 569 residues: Nucleoprotein (569 aa).

The tract at residues 54–241 is binding site for the cap structure m7GTP; it reads MRKERRDDND…IDTKKSSLNI (188 aa). Residues aspartate 389 and glutamate 391 each coordinate Mn(2+). Residues glutamate 399, cysteine 506, histidine 509, and cysteine 529 each coordinate Zn(2+). Aspartate 533 provides a ligand contact to Mn(2+).

This sequence belongs to the arenaviridae nucleocapsid protein family. In terms of assembly, homomultimerizes to form the nucleocapsid. Binds to viral genomic RNA. Interacts with glycoprotein G2. Interacts with protein Z; this interaction probably directs the encapsidated genome to budding sites. Interacts with protein L; this interaction does not interfere with Z-L interaction. Interacts with host IKBKE (via Protein kinase domain); the interaction inhibits IKBKE kinase activity.

The protein localises to the virion. It localises to the host cytoplasm. Encapsidates the genome, protecting it from nucleases. The encapsidated genomic RNA is termed the nucleocapsid (NC). Serves as template for viral transcription and replication. The increased presence of protein N in host cell does not seem to trigger the switch from transcription to replication as observed in other negative strain RNA viruses. Through the interaction with host IKBKE, strongly inhibits the phosphorylation and nuclear translocation of host IRF3, a protein involved in interferon activation pathway, leading to the inhibition of interferon-beta and IRF3-dependent promoters activation. Also encodes a functional 3'-5' exoribonuclease that degrades preferentially dsRNA substrates and thereby participates in the suppression of interferon induction. The chain is Nucleoprotein from Lassa virus (strain Mouse/Sierra Leone/Josiah/1976) (LASV).